A 607-amino-acid chain; its full sequence is Elongation factor 4 (607 aa).

Residues 11 to 193 (SKIRNFSIIA…QIVEKVPAPT (183 aa)) form the tr-type G domain. Residues 23–28 (DHGKST) and 140–143 (NKID) contribute to the GTP site.

Belongs to the TRAFAC class translation factor GTPase superfamily. Classic translation factor GTPase family. LepA subfamily.

It localises to the cell membrane. It catalyses the reaction GTP + H2O = GDP + phosphate + H(+). Functionally, required for accurate and efficient protein synthesis under certain stress conditions. May act as a fidelity factor of the translation reaction, by catalyzing a one-codon backward translocation of tRNAs on improperly translocated ribosomes. Back-translocation proceeds from a post-translocation (POST) complex to a pre-translocation (PRE) complex, thus giving elongation factor G a second chance to translocate the tRNAs correctly. Binds to ribosomes in a GTP-dependent manner. The sequence is that of Elongation factor 4 from Bacillus anthracis (strain A0248).